Here is a 289-residue protein sequence, read N- to C-terminus: 4-hydroxybenzoate octaprenyltransferase (289 aa).

Helical transmembrane passes span 21–40 (PIGT…LAAG), 95–115 (VLAL…TMNS), 116–136 (LTIA…FMKR), 138–158 (IPIP…MAYA), 161–181 (ANAL…WTIA), 213–233 (IIGV…QLMG), 236–256 (AWYY…QRLI), and 268–288 (FLNN…NYLL).

This sequence belongs to the UbiA prenyltransferase family. Mg(2+) serves as cofactor.

It localises to the cell inner membrane. The enzyme catalyses all-trans-octaprenyl diphosphate + 4-hydroxybenzoate = 4-hydroxy-3-(all-trans-octaprenyl)benzoate + diphosphate. It participates in cofactor biosynthesis; ubiquinone biosynthesis. Its function is as follows. Catalyzes the prenylation of para-hydroxybenzoate (PHB) with an all-trans polyprenyl group. Mediates the second step in the final reaction sequence of ubiquinone-8 (UQ-8) biosynthesis, which is the condensation of the polyisoprenoid side chain with PHB, generating the first membrane-bound Q intermediate 3-octaprenyl-4-hydroxybenzoate. The chain is 4-hydroxybenzoate octaprenyltransferase from Aeromonas salmonicida (strain A449).